The primary structure comprises 1862 residues: Ankyrin-1 (1862 aa).

The interval 1-827 (MGFCKADAAT…DELVGSKAER (827 aa)) is 89 kDa domain. ANK repeat units lie at residues 40 to 69 (NGLN…ILET), 73 to 102 (KGNT…NVNA), 106 to 135 (KGFT…NQNV), 139 to 168 (DGFT…KGKV), 170 to 197 (LPAL…NPDV), 201 to 230 (TGFT…SVNF), 234 to 263 (NGIT…QIET), 267 to 296 (DELT…PIQA), 300 to 329 (NGLS…EIDD), 333 to 362 (DHLT…KPNS), 366 to 395 (NGFT…SIDA), 399 to 428 (SGLT…SPNV), 432 to 461 (KVET…KANA), 465 to 494 (DDQT…SPNL), 498 to 527 (AGHT…SQAC), 531 to 560 (KGFT…HPNA), 564 to 593 (NGLT…SPHS), 597 to 626 (NGYT…SANA), 630 to 659 (QGVT…NGNL), 663 to 692 (SGLT…TVDA), 696 to 725 (MGYT…DVNA), 729 to 758 (LGYS…SPNE), and 762 to 791 (NGTT…ETSV). K55 bears the Phosphoserine mark. Residue N101 is modified to (3S)-3-hydroxyasparagine; by HIF1AN; partial. N229 is modified ((3S)-3-hydroxyasparagine; by HIF1AN). S425 is modified (phosphoserine). 2 positions are modified to (3S)-3-hydroxyasparagine; by HIF1AN: N427 and N460. N625 and N658 each carry (3S)-3-hydroxyasparagine; by HIF1AN. Position 691 is a (3S)-3-hydroxyaspartate; by HIF1AN (D691). Residue N724 is modified to (3S)-3-hydroxyasparagine; by HIF1AN. S755 is subject to Phosphoserine. N757 is subject to (3S)-3-hydroxyasparagine; by HIF1AN. Phosphoserine occurs at positions 777, 813, 830, and 852. The segment at 812 to 834 (VSEDEGDELVGSKAERRDSRDVG) is disordered. Basic and acidic residues predominate over residues 824–834 (KAERRDSRDVG). Phosphothreonine is present on T862. A disordered region spans residues 872-900 (DQEQASKEYDEDSLIPSSPATETSDNISP). The span at 886 to 900 (IPSSPATETSDNISP) shows a compositional bias: polar residues. ZU5 domains follow at residues 909-1064 (FLVS…IMSR) and 1066-1212 (CQDY…LSDC). At T957 the chain carries Phosphothreonine. Y1069 carries the phosphotyrosine modification. Position 1078 is a phosphoserine (S1078). The UPA domain stretch occupies residues 1197–1331 (ANFTTNVSAR…PVKVRDSSRE (135 aa)). A phosphothreonine mark is found at T1374 and T1376. Phosphoserine occurs at positions 1386 and 1388. Positions 1387 to 1862 (ESRLGFTSDT…KRASLKRGKQ (476 aa)) are 55 kDa regulatory domain. At T1396 the chain carries Phosphothreonine. The region spanning 1399–1483 (VEMRMAVIRE…EIVNMLEGSG (85 aa)) is the Death domain. 3 positions are modified to phosphoserine: S1424, S1473, and S1482. A disordered region spans residues 1481 to 1506 (GSGRQSRNLKPERRHGDREYSLSPSQ). A compositionally biased stretch (basic and acidic residues) spans 1489–1500 (LKPERRHGDREY). Phosphoserine occurs at positions 1519, 1529, and 1612. 2 disordered regions span residues 1598–1720 (EGAH…GPHS) and 1744–1767 (VSTR…KEPS). Residues 1637–1647 (EGQRSEKKRQE) show a composition bias toward basic and acidic residues. Positions 1648-1666 (VSGTEQDTETEVSLVSGQQ) are enriched in polar residues. Phosphoserine is present on residues S1660, S1675, and S1685. Basic and acidic residues predominate over residues 1681–1694 (VLDRSQARTLDWDK). The segment covering 1695-1720 (QGSTAVHPQEATQSSWQEEVTQGPHS) has biased composition (polar residues).

In terms of assembly, component of the ankyrin-1 complex in the erythrocyte, composed of ANK1, RHCE, RHAG, SLC4A1, EPB42, GYPA, GYPB and AQP1. Interacts with a number of integral membrane proteins and cytoskeletal proteins. Interacts (via N-terminus) with SPTB/spectrin (beta chain). Also interacts with TTN/titin. Isoform Mu17 interacts with OBSCN isoform 3/obscurin. Interacts with HIF1AN. Interacts (via ANK 1-5 repeats) with RHCE; this interaction mediates the primary membrane attachment site for ANK1. Interacts (via ANK 1-2 repeats) with AQP1 (via the N-terminal). Interacts (via ANK 1-13 repeats) with EPB42. Interacts directly with SLC4A1 (via the cytoplasmic domain); this interaction is mediated by the SLC4A1 Band 3-II and Band 3-III dimers. Post-translationally, regulated by phosphorylation. In terms of processing, acylated by palmitic acid group(s). Hydroxylated by HIF1AN at several asparagine and 1 aspartate residue within ANK repeat region; hydroxylation seems to increase the conformational stability of this region and may also modulate protein-protein interactions mediated by the ANK repeat region.

It localises to the cytoplasm. The protein localises to the cytoskeleton. Its subcellular location is the membrane. It is found in the sarcoplasmic reticulum. Functionally, component of the ankyrin-1 complex, a multiprotein complex involved in the stability and shape of the erythrocyte membrane. Attaches integral membrane proteins to cytoskeletal elements; binds to the erythrocyte membrane protein band 4.2, to Na-K ATPase, to the lymphocyte membrane protein GP85, and to the cytoskeletal proteins fodrin, tubulin, vimentin and desmin. Erythrocyte ankyrins also link spectrin (beta chain) to the cytoplasmic domain of the erythrocytes anion exchange protein; they retain most or all of these binding functions. This Mus musculus (Mouse) protein is Ankyrin-1.